The sequence spans 239 residues: Ribosomal RNA small subunit methyltransferase G (239 aa).

Residues Gly79, Phe84, 130–131, and Arg149 contribute to the S-adenosyl-L-methionine site; that span reads AE.

This sequence belongs to the methyltransferase superfamily. RNA methyltransferase RsmG family.

Its subcellular location is the cytoplasm. Its function is as follows. Specifically methylates the N7 position of a guanine in 16S rRNA. This is Ribosomal RNA small subunit methyltransferase G from Pelotomaculum thermopropionicum (strain DSM 13744 / JCM 10971 / SI).